The chain runs to 206 residues: dITP/XTP pyrophosphatase (206 aa).

10–15 (SGNAGK) lines the substrate pocket. The Mg(2+) site is built by Glu-40 and Asp-69. Asp-69 serves as the catalytic Proton acceptor. Substrate contacts are provided by residues Ser-70, 148 to 151 (FGYD), Lys-171, and 176 to 177 (HR).

This sequence belongs to the HAM1 NTPase family. In terms of assembly, homodimer. Requires Mg(2+) as cofactor.

It carries out the reaction XTP + H2O = XMP + diphosphate + H(+). The enzyme catalyses dITP + H2O = dIMP + diphosphate + H(+). It catalyses the reaction ITP + H2O = IMP + diphosphate + H(+). Functionally, pyrophosphatase that catalyzes the hydrolysis of nucleoside triphosphates to their monophosphate derivatives, with a high preference for the non-canonical purine nucleotides XTP (xanthosine triphosphate), dITP (deoxyinosine triphosphate) and ITP. Seems to function as a house-cleaning enzyme that removes non-canonical purine nucleotides from the nucleotide pool, thus preventing their incorporation into DNA/RNA and avoiding chromosomal lesions. In Synechococcus sp. (strain CC9311), this protein is dITP/XTP pyrophosphatase.